The following is a 91-amino-acid chain: Mercuric transport protein periplasmic component (91 aa).

The first 19 residues, 1 to 19, serve as a signal peptide directing secretion; sequence MKKLFASLALAAFVAPVFA. Residues 22-88 form the HMA domain; it reads QTVTLSVPGM…ATEDAGYPSS (67 aa). Cys33 and Cys36 together coordinate Hg(2+).

Belongs to the MerP family. Monomer.

The protein resides in the periplasm. In terms of biological role, involved in mercury resistance. Acts as a mercury scavenger that specifically binds to a mercuric ion in the periplasm and probably passes it to the cytoplasmic mercuric reductase MerA via the mercuric transport protein MerT. This chain is Mercuric transport protein periplasmic component, found in Acinetobacter calcoaceticus.